The sequence spans 293 residues: Acetyl-coenzyme A carboxylase carboxyl transferase subunit beta (293 aa).

A CoA carboxyltransferase N-terminal domain is found at 29–293 (LWSKCPECGQ…GCKPMELTSA (265 aa)). Zn(2+) contacts are provided by C33, C36, C52, and C55. The C4-type zinc-finger motif lies at 33-55 (CPECGQVVYLKDLKLNASVCANC).

The protein belongs to the AccD/PCCB family. Acetyl-CoA carboxylase is a heterohexamer composed of biotin carboxyl carrier protein (AccB), biotin carboxylase (AccC) and two subunits each of ACCase subunit alpha (AccA) and ACCase subunit beta (AccD). Zn(2+) serves as cofactor.

It localises to the cytoplasm. The enzyme catalyses N(6)-carboxybiotinyl-L-lysyl-[protein] + acetyl-CoA = N(6)-biotinyl-L-lysyl-[protein] + malonyl-CoA. It participates in lipid metabolism; malonyl-CoA biosynthesis; malonyl-CoA from acetyl-CoA: step 1/1. Its function is as follows. Component of the acetyl coenzyme A carboxylase (ACC) complex. Biotin carboxylase (BC) catalyzes the carboxylation of biotin on its carrier protein (BCCP) and then the CO(2) group is transferred by the transcarboxylase to acetyl-CoA to form malonyl-CoA. The sequence is that of Acetyl-coenzyme A carboxylase carboxyl transferase subunit beta from Synechococcus sp. (strain CC9605).